The following is a 107-amino-acid chain: UPF0145 protein PC1_1703 (107 aa).

The protein belongs to the UPF0145 family.

The polypeptide is UPF0145 protein PC1_1703 (Pectobacterium carotovorum subsp. carotovorum (strain PC1)).